Consider the following 882-residue polypeptide: ABC transporter H family member 4 (882 aa).

3 consecutive transmembrane segments (helical) span residues 4–24 (WIKL…ISVF), 35–55 (LLFK…LLPW), and 79–101 (TNGP…YAIL). The region spanning 384-863 (FSYENKFSSE…NAQVYYKLLG (480 aa)) is the ABC transporter domain. 418–425 (GQNRSGKS) lines the ATP pocket. 3 disordered regions span residues 522–617 (FDPD…YSTI), 634–669 (SMSQ…NSGV), and 710–730 (NSGG…NQRS). Low complexity-rich tracts occupy residues 528–617 (IPPT…YSTI) and 647–667 (NGNN…INNS). Positions 715-724 (DESDDDDEEA) are enriched in acidic residues.

Belongs to the ABC transporter superfamily. ABCH family.

The protein resides in the membrane. This Dictyostelium discoideum (Social amoeba) protein is ABC transporter H family member 4 (abcH4).